The following is a 434-amino-acid chain: UDP-N-acetylglucosamine 1-carboxyvinyltransferase (434 aa).

Residue 22-23 (KN) coordinates phosphoenolpyruvate. Arg-99 is a binding site for UDP-N-acetyl-alpha-D-glucosamine. The Proton donor role is filled by Cys-123. Residue Cys-123 is modified to 2-(S-cysteinyl)pyruvic acid O-phosphothioketal. Residues 128 to 132 (RPVDQ), Asp-317, and Ile-339 each bind UDP-N-acetyl-alpha-D-glucosamine.

The protein belongs to the EPSP synthase family. MurA subfamily.

The protein localises to the cytoplasm. The enzyme catalyses phosphoenolpyruvate + UDP-N-acetyl-alpha-D-glucosamine = UDP-N-acetyl-3-O-(1-carboxyvinyl)-alpha-D-glucosamine + phosphate. The protein operates within cell wall biogenesis; peptidoglycan biosynthesis. Its function is as follows. Cell wall formation. Adds enolpyruvyl to UDP-N-acetylglucosamine. The chain is UDP-N-acetylglucosamine 1-carboxyvinyltransferase from Paracidovorax citrulli (strain AAC00-1) (Acidovorax citrulli).